A 397-amino-acid polypeptide reads, in one-letter code: Growth-regulating factor 5 (397 aa).

A QLQ domain is found at 16–51 (PFTPTQWEELEHQALIYKYMVSGVPVPPELIFSIRR). 2 consecutive short sequence motifs (bipartite nuclear localization signal) follow at residues 78–96 (RKPD…KKWR) and 114–121 (RGRNRARK). A WRC domain is found at 81–125 (DPEPGRCRRTDGKKWRCSREAYPDSKYCEKHMHRGRNRARKSLDQ). Disordered regions lie at residues 108-172 (CEKH…SMDA), 197-217 (LDYP…HHAS), 288-320 (PYHH…DHDH), and 340-397 (VLAN…DTGS). The span at 111 to 120 (HMHRGRNRAR) shows a compositional bias: basic residues. Residues 128 to 172 (TTTTPLTSPSLSFTNNNNPSPTLSSSSSSNSSSTTYSASSSSMDA) are compositionally biased toward low complexity. Over residues 288–298 (PYHHCSTDHNK) the composition is skewed to basic and acidic residues.

The protein belongs to the GRF family. Interacts with GIF1. In terms of tissue distribution, strongly expressed in actively growing and developing tissues, such as roots, upper stems, and shoot tips containing the shoot apical meristem (SAM) and flower buds. Also expressed in mature flowers, but weakly expressed in mature stems and leaves.

It localises to the nucleus. Functionally, transcription activator that plays a role in the regulation of cell expansion in leaf and cotyledons tissues. Acts together with GIF1 for the development of appropriate leaf size and shape through the promotion and/or maintenance of cell proliferation activity in leaf primordia. The chain is Growth-regulating factor 5 (GRF5) from Arabidopsis thaliana (Mouse-ear cress).